A 569-amino-acid chain; its full sequence is MKMSREEYAELFGPTTGDKIRLGDTDLWIEVEKDFTVYGEEMIFGGGKTIRDGMGQNGRITGKDGALDLVITNVVLLDYTGIVKADVGVKDGRIVGVGKSGNPDIMDGVDPHMVIGAGTEVISGEGKILTAGGVDTHIHFICPQQMEVALSSGVTTLLGGGTGPATGSKATTCTSGAWYMARMLEAAEEFPINVGFLGKGNASDKAPLIEQVEAGAIGLKLHEDWGTTPSAIKTCMEVVDEADIQVAIHTDTINEAGFLENTLDAIGDRVIHTYHIEGAGGGHAPDIMKLASYANILPSSTTPTIPYTVNTMDEHLDMMMVCHHLDAKVPEDVAFSHSRIRAATIAAEDILHDIGAISMTSSDSQAMGRVGEVIIRTWQVADKMKKQRGALAGENGNDNVRAKRYIAKYTINPAITHGLSHEVGSVEKGKLADLVLWDPVFFGVKPELVLKGGMIARAQMGDPNASIPTPEPVFMRQMYASYGKANRSTSITFMSQASIERGVAESLGLEKRISPVKNIRKLSKLDMKLNSALPKIEIDPKTYQVFADGEELSCQPVDYVPLGQRYFLF.

The 438-residue stretch at 132-569 (GGVDTHIHFI…VPLGQRYFLF (438 aa)) folds into the Urease domain. Positions 137, 139, and 220 each coordinate Ni(2+). N6-carboxylysine is present on lysine 220. Position 222 (histidine 222) interacts with substrate. Histidine 249 and histidine 275 together coordinate Ni(2+). The active-site Proton donor is the histidine 323. Residue aspartate 363 coordinates Ni(2+).

This sequence belongs to the metallo-dependent hydrolases superfamily. Urease alpha subunit family. In terms of assembly, heterotrimer of UreA (gamma), UreB (beta) and UreC (alpha) subunits. Three heterotrimers associate to form the active enzyme. It depends on Ni cation as a cofactor. Carboxylation allows a single lysine to coordinate two nickel ions.

Its subcellular location is the cytoplasm. The enzyme catalyses urea + 2 H2O + H(+) = hydrogencarbonate + 2 NH4(+). The protein operates within nitrogen metabolism; urea degradation; CO(2) and NH(3) from urea (urease route): step 1/1. This chain is Urease subunit alpha, found in Bacillus subtilis (strain 168).